The following is an 87-amino-acid chain: Small ribosomal subunit protein bS20 (87 aa).

This sequence belongs to the bacterial ribosomal protein bS20 family.

Functionally, binds directly to 16S ribosomal RNA. In Clostridium botulinum (strain Alaska E43 / Type E3), this protein is Small ribosomal subunit protein bS20.